The chain runs to 270 residues: Putative envelope-preserving system protein Rv2743c (270 aa).

2 consecutive transmembrane segments (helical) span residues 50–72 (ALRWGLVFTAGCLLWGLVTALLA) and 77–99 (FTSLLVITGTIAVTQAIPATLLL).

Interacts with PspA and Rv2742c.

It localises to the membrane. Involved in preservation of envelope integrity and tolerance to surface stress. Reverses the inhibitory effect of PspA on ClgR activity. Facilitates intracellular growth of M.tuberculosis. The sequence is that of Putative envelope-preserving system protein Rv2743c from Mycobacterium tuberculosis (strain ATCC 25618 / H37Rv).